Consider the following 196-residue polypeptide: ATP-dependent Clp protease proteolytic subunit (196 aa).

The active-site Nucleophile is the Ser96. His121 is a catalytic residue.

Belongs to the peptidase S14 family. As to quaternary structure, fourteen ClpP subunits assemble into 2 heptameric rings which stack back to back to give a disk-like structure with a central cavity, resembling the structure of eukaryotic proteasomes.

It is found in the cytoplasm. It carries out the reaction Hydrolysis of proteins to small peptides in the presence of ATP and magnesium. alpha-casein is the usual test substrate. In the absence of ATP, only oligopeptides shorter than five residues are hydrolyzed (such as succinyl-Leu-Tyr-|-NHMec, and Leu-Tyr-Leu-|-Tyr-Trp, in which cleavage of the -Tyr-|-Leu- and -Tyr-|-Trp bonds also occurs).. In terms of biological role, cleaves peptides in various proteins in a process that requires ATP hydrolysis. Has a chymotrypsin-like activity. Plays a major role in the degradation of misfolded proteins. The chain is ATP-dependent Clp protease proteolytic subunit from Streptococcus thermophilus (strain CNRZ 1066).